Consider the following 72-residue polypeptide: Translational regulator CsrA (72 aa).

The protein belongs to the CsrA/RsmA family. Homodimer; the beta-strands of each monomer intercalate to form a hydrophobic core, while the alpha-helices form wings that extend away from the core.

The protein localises to the cytoplasm. Functionally, a translational regulator that binds mRNA to regulate translation initiation and/or mRNA stability. Usually binds in the 5'-UTR at or near the Shine-Dalgarno sequence preventing ribosome-binding, thus repressing translation. Its main target seems to be the major flagellin gene, while its function is anatagonized by FliW. This is Translational regulator CsrA from Clostridium botulinum (strain ATCC 19397 / Type A).